Reading from the N-terminus, the 569-residue chain is Melanophilin (569 aa).

The 121-residue stretch at 4–124 (KLDLSKLTDD…MGSLEWYYGH (121 aa)) folds into the RabBD domain. Residues 58-112 (HLNETHCARCLQPYRLLVAPKRQCLDCHLFTCQDCSHAHPEEEGWLCDPCHLARV) form an FYVE-type zinc finger. Residues 143 to 430 (GRLQGGGGPE…MQPGRTTDQE (288 aa)) form a disordered region. 2 stretches are compositionally biased toward basic and acidic residues: residues 352 to 362 (ETLKRKLEEMT) and 379 to 390 (EEEAGLNRKTSI). Residues 404-415 (SGQTSRQETSPR) are compositionally biased toward polar residues. The stretch at 431 to 465 (LLELEDRVAVTASEVQQVESEVSNIKSKIAALQAA) forms a coiled coil. The tract at residues 490-569 (GRLGQTPKDP…FAKPVMTQRP (80 aa)) is disordered. Positions 526 to 535 (SQDKAGDSFD) are enriched in basic and acidic residues.

Binds RAB27A that has been activated by GTP-binding via its N-terminus. Binds MYO5A via its C-terminal coiled coil domain.

The protein resides in the melanosome. Its function is as follows. Rab effector protein involved in melanosome transport. Serves as link between melanosome-bound RAB27A and the motor protein MYO5A. In Felis catus (Cat), this protein is Melanophilin (MLPH).